A 466-amino-acid chain; its full sequence is Chromosomal replication initiator protein DnaA (466 aa).

Residues 1–77 (MSQEIWADVL…GAEHPQVEFQ (77 aa)) are domain I, interacts with DnaA modulators. The interval 77–121 (QVLPAAQDALLLPNDPPPAPEAAAPTPKTKAAPTPPPSTPGDNRK) is domain II. Residues 87-122 (LLPNDPPPAPEAAAPTPKTKAAPTPPPSTPGDNRKT) are disordered. Residues 97–108 (EAAAPTPKTKAA) are compositionally biased toward low complexity. The segment at 122-338 (TLNPKYTFEN…GALMRVVAFA (217 aa)) is domain III, AAA+ region. ATP contacts are provided by Gly166, Gly168, Lys169, and Thr170. The segment at 339–466 (SLNNVPFSRA…GKEEEEEVGA (128 aa)) is domain IV, binds dsDNA.

Belongs to the DnaA family. As to quaternary structure, oligomerizes as a right-handed, spiral filament on DNA at oriC.

It is found in the cytoplasm. Functionally, plays an essential role in the initiation and regulation of chromosomal replication. ATP-DnaA binds to the origin of replication (oriC) to initiate formation of the DNA replication initiation complex once per cell cycle. Binds the DnaA box (a 9 base pair repeat at the origin) and separates the double-stranded (ds)DNA. Forms a right-handed helical filament on oriC DNA; dsDNA binds to the exterior of the filament while single-stranded (ss)DNA is stabiized in the filament's interior. The ATP-DnaA-oriC complex binds and stabilizes one strand of the AT-rich DNA unwinding element (DUE), permitting loading of DNA polymerase. After initiation quickly degrades to an ADP-DnaA complex that is not apt for DNA replication. Binds acidic phospholipids. Its function is as follows. Strand separation requires the DnaA boxes and adjacent DnaA-trio motifs but works equally well with ADP or ATP. The protein is Chromosomal replication initiator protein DnaA of Deinococcus radiodurans (strain ATCC 13939 / DSM 20539 / JCM 16871 / CCUG 27074 / LMG 4051 / NBRC 15346 / NCIMB 9279 / VKM B-1422 / R1).